The sequence spans 2359 residues: Low-reducing polyketide synthase drtA (2359 aa).

One can recognise a Ketosynthase family 3 (KS3) domain in the interval 17-444 (LPPIAVVSFA…GANAHVIVEE (428 aa)). Residues C190, H327, and H367 each act as for beta-ketoacyl synthase activity in the active site. The interval 556 to 868 (VFTGQGSQWP…QYLAALDRGK (313 aa)) is malonyl-CoA:ACP transacylase (MAT) domain. Catalysis depends on S648, which acts as the For malonyltransferase activity. Positions 940 to 1077 (HELLGRKILG…GRISVRQVAA (138 aa)) are N-terminal hotdog fold. A dehydratase (DH) domain region spans residues 940-1245 (HELLGRKILG…FKGLRFSELN (306 aa)). Residues 940 to 1250 (HELLGRKILG…FSELNMGDGV (311 aa)) enclose the PKS/mFAS DH domain. H972 (proton acceptor; for dehydratase activity) is an active-site residue. The tract at residues 1089–1250 (AYSESAEHWY…FSELNMGDGV (162 aa)) is C-terminal hotdog fold. Catalysis depends on D1153, which acts as the Proton donor; for dehydratase activity. Residues 1659–1970 (GSFDSLELYE…TGRHVGKVVV (312 aa)) are enoyl reductase (ER) domain. Residues 1995–2172 (SYLITGGLHG…LSLDIGAVQD (178 aa)) form a ketoreductase (KR) domain region. Residues 2280-2356 (ALTEAAIELF…ALCSKLITRL (77 aa)) enclose the Carrier domain. Residue S2316 is modified to O-(pantetheine 4'-phosphoryl)serine.

It functions in the pathway secondary metabolite biosynthesis; terpenoid biosynthesis. Low-reducing polyketide synthase; part of the gene cluster that mediates the biosynthesis of various drimane-type sesquiterpene esters, compounds that exhibit diverse biological activities and are widely present in eukaryotes. The pathway begins with the synthesis of the backbone drimenol by the terpene cyclase drtB using farnesyl pyrophosphate (FPP) as substrate. The cytochrome P450 monooxygenase drtD is then responsible for the hydroxylations at C-6, C-9 and C-12, as well as the oxidation of hydroxyl groups at C-6 and C-11 to a ketone and an aldehyde, respectively. Then, the biosynthesis can go in two directions, either the hydroxylated drimenol is further hydroxylated at C-2 and C-3 by an enzyme(s) not associated with the drt cluster, or the FAD-binding oxidoreductase drtC further oxidizes C-11 or C-12 to form the butyrolactone ring. DrtB, drtD and drtC are solely responsible for the formation of the different drimane structures observed during drimane sesquiterpenes biosynthesis. The polyketide synthase drtA synthesizes different lengths (C6 and C8) of PKS chains, which are then oxidized to varying degrees by the short-chain dehydrogenase drtF. Finally, these PKS chains are transferred onto drimane sesquiterpenes by the acyltransferase drtE, forming the sesquiterpene esters. In addition to the different fatty acyl-CoA chains produced by drtA, drtE is also able to use cinnamoyl-CoA as a substrate. The polypeptide is Low-reducing polyketide synthase drtA (Aspergillus calidoustus).